Here is a 272-residue protein sequence, read N- to C-terminus: Tryptophan synthase alpha chain (272 aa).

Residues E49 and D60 each act as proton acceptor in the active site.

Belongs to the TrpA family. In terms of assembly, tetramer of two alpha and two beta chains.

It carries out the reaction (1S,2R)-1-C-(indol-3-yl)glycerol 3-phosphate + L-serine = D-glyceraldehyde 3-phosphate + L-tryptophan + H2O. It functions in the pathway amino-acid biosynthesis; L-tryptophan biosynthesis; L-tryptophan from chorismate: step 5/5. The alpha subunit is responsible for the aldol cleavage of indoleglycerol phosphate to indole and glyceraldehyde 3-phosphate. This Methylibium petroleiphilum (strain ATCC BAA-1232 / LMG 22953 / PM1) protein is Tryptophan synthase alpha chain.